A 151-amino-acid chain; its full sequence is Chemokine-like factor (151 aa).

One can recognise an MARVEL domain in the interval 13-133; the sequence is FCLSLKCFVK…DCALMCQKLR (121 aa). The next 4 membrane-spanning stretches (helical) occupy residues 19–39, 45–65, 74–94, and 107–127; these read CFVK…FIVA, YIVI…LYMC, FFWP…MLIV, and IMVG…DCAL. Asn142 carries an N-linked (GlcNAc...) asparagine glycan.

This sequence belongs to the chemokine-like factor family. As to expression, both isoforms have highest expression levels in testis with relatively lower expression level in liver, spleen, lung, brain and heart and barely detectable levels in skeletal muscle and kidney were barely detected. In most tissues, isoform CKLF2 has higher expression levels than isoform CKLF1.

Its subcellular location is the secreted. The protein resides in the membrane. May play an important role in inflammation and regeneration of skeletal muscle. Essential for embryonic development. Its function is as follows. Has chemotactic response in monocytes, neutrophils and lymphocytes. Binds CCR4. This Rattus norvegicus (Rat) protein is Chemokine-like factor (Cklf).